A 276-amino-acid polypeptide reads, in one-letter code: Rhomboid-type serine protease 2 (276 aa).

The next 5 helical transmembrane spans lie at leucine 27–valine 47, phenylalanine 77–leucine 97, threonine 109–valine 129, phenylalanine 132–glycine 152, and tryptophan 175–leucine 195. Serine 144 (nucleophile) is an active-site residue. The active site involves histidine 197. The chain crosses the membrane as a helical span at residues leucine 198–proline 218.

It belongs to the peptidase S54 family.

It is found in the golgi apparatus membrane. The protein localises to the golgi apparatus. It localises to the cis-Golgi network membrane. It carries out the reaction Cleaves type-1 transmembrane domains using a catalytic dyad composed of serine and histidine that are contributed by different transmembrane domains.. Functionally, probable rhomboid-type serine protease that catalyzes intramembrane proteolysis. The protein is Rhomboid-type serine protease 2 (rbd-2) of Neurospora crassa (strain ATCC 24698 / 74-OR23-1A / CBS 708.71 / DSM 1257 / FGSC 987).